Here is a 1133-residue protein sequence, read N- to C-terminus: Sterol regulatory element-binding protein 2 (1133 aa).

A transcriptional activation (acidic) region spans residues 1 to 50 (MDENSELGGLETMETLTELGDELTLGDIDEMLQFVSNQVGEFSDLFSEQL). Residues 1-473 (MDENSELGGL…VALGMVDRSR (473 aa)) are Cytoplasmic-facing. Residues 56 to 65 (GGGGGSGSGG) show a composition bias toward gly residues. Residues 56–136 (GGGGGSGSGG…PQPQPQPPAQ (81 aa)) form a disordered region. Positions 92-109 (PLSTFSPSSTSPQAPALQ) are enriched in low complexity. Over residues 114-134 (PTPPRATPVLQPRPQPQPQPP) the composition is skewed to pro residues. Residues 229-483 (QQVPVLVQPQ…ILLCVLTFLG (255 aa)) are interaction with LMNA. Residues 322-372 (ERRTTHNIIEKRYRSSINDKIIELKDLVMGTDAKMHKSGVLRKAIDYIKYL) form the bHLH domain. A leucine-zipper region spans residues 372-393 (LQQVNHKLRQENMVLKLANQKN). Lys-456 is covalently cross-linked (Glycyl lysine isopeptide (Lys-Gly) (interchain with G-Cter in SUMO2)). The helical transmembrane segment at 474-494 (ILLCVLTFLGLSFNPLTSLLQ) threads the bilayer. The Lumenal portion of the chain corresponds to 495–525 (WGGAHNPDQHPYSGSGRNVLSLESGSGGWFD). The chain crosses the membrane as a helical span at residues 526–546 (WMMPTLLLWLLNGVIVLSVFV). Residues 547–1133 (KLLVHGEPVI…LGGGTAIAAS (587 aa)) lie on the Cytoplasmic side of the membrane. Ser-1090 is subject to Phosphoserine.

This sequence belongs to the SREBP family. In terms of assembly, homodimer; efficient DNA binding of the soluble transcription factor fragment requires dimerization with another bHLH protein. Interacts with LMNA. Forms a tight complex with SCAP, the SCAP-SREBP complex, in the endoplasmic reticulum membrane and the Golgi apparatus. Interacts with PAQR3; the interaction anchors the SCAP-SREBP complex to the Golgi apparatus in low cholesterol conditions. Interacts (via C-terminal domain) with RNF139. Post-translationally, processed in the Golgi apparatus, releasing the protein from the membrane. At low cholesterol the SCAP-SREBP complex is recruited into COPII vesicles for export from the endoplasmic reticulum. In the Golgi, complex SREBPs are cleaved sequentially by site-1 (MBTPS1, S1P) and site-2 (MBTPS2, S2P) proteases. The first cleavage by site-1 protease occurs within the luminal loop, the second cleavage by site-2 protease occurs within the first transmembrane domain, releasing the transcription factor from the Golgi membrane. Apoptosis triggers cleavage by the cysteine proteases caspase-3 and caspase-7. Cleavage and activation is induced by mediated cholesterol efflux. In terms of processing, phosphorylated by AMPK, leading to suppress protein processing and nuclear translocation, and repress target gene expression. SCAP-free SREBF2 is ubiquitinated by the BCR(ARMC5) complex, leading to its degradation. Post-translationally, ubiquitinated; the nuclear form has a rapid turnover and is rapidly ubiquitinated and degraded by the proteasome in the nucleus.

The protein resides in the endoplasmic reticulum membrane. It is found in the golgi apparatus membrane. Its subcellular location is the cytoplasmic vesicle. The protein localises to the COPII-coated vesicle membrane. It localises to the nucleus. With respect to regulation, activation by cleavage is down-regulated upon activation of SIRT3-dependent PRKAA1/AMPK-alpha signaling cascade which leads to inhibition of ATP-consuming lipogenesis to restore cellular energy balance. In terms of biological role, precursor of the transcription factor form (Processed sterol regulatory element-binding protein 2), which is embedded in the endoplasmic reticulum membrane. Low sterol concentrations promote processing of this form, releasing the transcription factor form that translocates into the nucleus and activates transcription of genes involved in cholesterol biosynthesis. Its function is as follows. Key transcription factor that regulates expression of genes involved in cholesterol biosynthesis. Binds to the sterol regulatory element 1 (SRE-1) (5'-ATCACCCCAC-3'). Has dual sequence specificity binding to both an E-box motif (5'-ATCACGTGA-3') and to SRE-1 (5'-ATCACCCCAC-3'). Regulates transcription of genes related to cholesterol synthesis pathway. Regulates hepatic lipogenesis. This is Sterol regulatory element-binding protein 2 from Rattus norvegicus (Rat).